Consider the following 192-residue polypeptide: Peptidyl-tRNA hydrolase (192 aa).

A tRNA-binding site is contributed by Tyr18. Catalysis depends on His23, which acts as the Proton acceptor. Residues Phe69, Asn71, and Asn117 each coordinate tRNA.

Belongs to the PTH family. In terms of assembly, monomer.

Its subcellular location is the cytoplasm. It catalyses the reaction an N-acyl-L-alpha-aminoacyl-tRNA + H2O = an N-acyl-L-amino acid + a tRNA + H(+). In terms of biological role, hydrolyzes ribosome-free peptidyl-tRNAs (with 1 or more amino acids incorporated), which drop off the ribosome during protein synthesis, or as a result of ribosome stalling. Catalyzes the release of premature peptidyl moieties from peptidyl-tRNA molecules trapped in stalled 50S ribosomal subunits, and thus maintains levels of free tRNAs and 50S ribosomes. This chain is Peptidyl-tRNA hydrolase, found in Neisseria meningitidis serogroup B (strain ATCC BAA-335 / MC58).